The following is a 297-amino-acid chain: Tyrosine recombinase XerD (297 aa).

Residues 1–87 (MLEYAIEDFF…SIRSFHQFLI (87 aa)) form the Core-binding (CB) domain. One can recognise a Tyr recombinase domain in the interval 108–291 (KLPDILSQDE…TKARLKDMYQ (184 aa)). Catalysis depends on residues Arg147, Lys171, His243, Arg246, and His269. The active-site O-(3'-phospho-DNA)-tyrosine intermediate is the Tyr278.

Belongs to the 'phage' integrase family. XerD subfamily. Forms a cyclic heterotetrameric complex composed of two molecules of XerC and two molecules of XerD.

The protein resides in the cytoplasm. In terms of biological role, site-specific tyrosine recombinase, which acts by catalyzing the cutting and rejoining of the recombining DNA molecules. The XerC-XerD complex is essential to convert dimers of the bacterial chromosome into monomers to permit their segregation at cell division. It also contributes to the segregational stability of plasmids. This Oceanobacillus iheyensis (strain DSM 14371 / CIP 107618 / JCM 11309 / KCTC 3954 / HTE831) protein is Tyrosine recombinase XerD.